Reading from the N-terminus, the 214-residue chain is Ribosomal RNA small subunit methyltransferase G (214 aa).

Residues glycine 56, phenylalanine 61, 107–108 (IE), and arginine 125 contribute to the S-adenosyl-L-methionine site.

Belongs to the methyltransferase superfamily. RNA methyltransferase RsmG family.

Its subcellular location is the cytoplasm. Functionally, specifically methylates the N7 position of a guanine in 16S rRNA. This Syntrophomonas wolfei subsp. wolfei (strain DSM 2245B / Goettingen) protein is Ribosomal RNA small subunit methyltransferase G.